The sequence spans 327 residues: Complex I intermediate-associated protein 30, mitochondrial (327 aa).

A mitochondrion-targeting transit peptide spans 1 to 24 (MALVHKLLRGTYILRKFSKPASAL). The tract at residues 42 to 63 (PVASPGKASSQRKTEGDLQGDH) is disordered. Residues 53–63 (RKTEGDLQGDH) are compositionally biased toward basic and acidic residues. Ser-318 carries the post-translational modification Phosphoserine.

The protein belongs to the CIA30 family. In terms of assembly, part of the mitochondrial complex I assembly/MCIA complex that comprises at least the core subunits TMEM126B, NDUFAF1, ECSIT and ACAD9 and complement subunits such as COA1 and TMEM186. Interacts with ECSIT. Interacts with ACAD9. At early stages of complex I assembly, it is found in intermediate subcomplexes that contain different subunits including NDUFB6, NDUFA6, NDUFA9, NDUFS3, NDUFS7, ND1, ND2 and ND3. Interacts with TMEM70 and TMEM242.

It is found in the mitochondrion. The protein localises to the mitochondrion matrix. As part of the MCIA complex, involved in the assembly of the mitochondrial complex I. This chain is Complex I intermediate-associated protein 30, mitochondrial, found in Pongo pygmaeus (Bornean orangutan).